An 80-amino-acid chain; its full sequence is Mitotic-spindle organizing protein 1 (80 aa).

Belongs to the MOZART1 family. Part of the gamma-tubulin complex.

It is found in the cytoplasm. It localises to the cytoskeleton. The protein localises to the microtubule organizing center. Its subcellular location is the spindle pole body. Functionally, required for gamma-tubulin complex recruitment to the microtubule organizing center (MTOC). The chain is Mitotic-spindle organizing protein 1 from Pyricularia oryzae (strain 70-15 / ATCC MYA-4617 / FGSC 8958) (Rice blast fungus).